The following is an 868-amino-acid chain: Muscle, skeletal receptor tyrosine protein kinase (868 aa).

The signal sequence occupies residues Met1–Thr21. Over Glu22–Thr494 the chain is Extracellular. 3 Ig-like domains span residues Pro28 to Gln116, Pro121 to Lys205, and Ala212 to Ser302. 3 disulfide bridges follow: Cys49–Cys99, Cys98–Cys112, and Cys142–Cys190. N-linked (GlcNAc...) asparagine glycosylation occurs at Asn222. Intrachain disulfides connect Cys233–Cys282, Cys317–Cys382, Cys325–Cys375, Cys366–Cys406, Cys394–Cys447, and Cys398–Cys434. Positions Glu312–Leu450 constitute an FZ domain. Asn338 is a glycosylation site (N-linked (GlcNAc...) asparagine). Asn459 carries an N-linked (GlcNAc...) asparagine glycan. The chain crosses the membrane as a helical span at residues Val495 to Tyr515. Residues Cys516–Val868 are Cytoplasmic-facing. A Phosphotyrosine; by autocatalysis modification is found at Tyr553. Positions Ile574 to Leu855 constitute a Protein kinase domain. ATP is bound by residues Ile580–Val588 and Lys608. 2 positions are modified to phosphoserine; by CK2: Ser680 and Ser697. Catalysis depends on Asp724, which acts as the Proton acceptor. Tyr754 is modified (phosphotyrosine; by autocatalysis).

The protein belongs to the protein kinase superfamily. Tyr protein kinase family. As to quaternary structure, monomer. Homodimer. Interacts with LRP4; the heterodimer forms an AGRIN receptor complex that binds AGRIN resulting in activation of MUSK. Forms a heterotetramer composed of 2 DOK7 and 2 MUSK molecules which facilitates MUSK trans-autophosphorylation on tyrosine residue and activation. Interacts (via cytoplasmic part) with DOK7 (via IRS-type PTB domain); requires MUSK phosphorylation. Interacts with DVL1 (via DEP domain); the interaction is direct and mediates the formation of a DVL1, MUSK and PAK1 ternary complex involved in AChR clustering. Interacts with PDZRN3; this interaction is enhanced by agrin. Interacts with FNTA; the interaction is direct and mediates AGRIN-induced phosphorylation and activation of FNTA. Interacts with CSNK2B; mediates regulation by CK2. Interacts (via the cytoplasmic domain) with DNAJA3. Interacts with NSF; may regulate MUSK endocytosis and activity. Interacts with CAV3; may regulate MUSK signaling. Interacts with RNF31. Interacts with DOK7. It depends on Mg(2+) as a cofactor. Post-translationally, ubiquitinated by PDZRN3. Ubiquitination promotes endocytosis and lysosomal degradation. Phosphorylated. Phosphorylation is induced by AGRIN in a LRP4-dependent manner. Autophosphorylated. Autophosphorylation at Tyr-553 is required for interaction with DOK7 which in turn stimulates the phosphorylation and the activation of MUSK. In terms of processing, neddylated. In terms of tissue distribution, muscle specific.

It is found in the postsynaptic cell membrane. The enzyme catalyses L-tyrosyl-[protein] + ATP = O-phospho-L-tyrosyl-[protein] + ADP + H(+). Positively regulated by CK2. Functionally, receptor tyrosine kinase which plays a central role in the formation and the maintenance of the neuromuscular junction (NMJ), the synapse between the motor neuron and the skeletal muscle. Recruitment of AGRIN by LRP4 to the MUSK signaling complex induces phosphorylation and activation of MUSK, the kinase of the complex. The activation of MUSK in myotubes regulates the formation of NMJs through the regulation of different processes including the specific expression of genes in subsynaptic nuclei, the reorganization of the actin cytoskeleton and the clustering of the acetylcholine receptors (AChR) in the postsynaptic membrane. May regulate AChR phosphorylation and clustering through activation of ABL1 and Src family kinases which in turn regulate MUSK. DVL1 and PAK1 that form a ternary complex with MUSK are also important for MUSK-dependent regulation of AChR clustering. May positively regulate Rho family GTPases through FNTA. Mediates the phosphorylation of FNTA which promotes prenylation, recruitment to membranes and activation of RAC1 a regulator of the actin cytoskeleton and of gene expression. Other effectors of the MUSK signaling include DNAJA3 which functions downstream of MUSK. May also play a role within the central nervous system by mediating cholinergic responses, synaptic plasticity and memory formation. The polypeptide is Muscle, skeletal receptor tyrosine protein kinase (Musk) (Rattus norvegicus (Rat)).